Reading from the N-terminus, the 533-residue chain is MAVALDPLTDRFSQFSRSSQRCRLQSLTNLDFNFLGFNTKQTNLSASSHSLNNRSVSTPCFSISGSNLDGSATPHIEILGGQRVPTVRSLVAEVTIAIVSGAQPLLLPSGLGGAYLLQTEKGNNIAVAKPVDEEPLAFNNPKGSGGLTLGQPGMKRSIRVGESGIRELAAYLLDHQGFSSVPPTALVRISHVPFHDRGSDHAAYKVASLQRFVGHDFDAGELGPGSFTVVSVHRIGILDVRVLNLDRHAGNMLVKKIHDQDETTCSNGVGAAELVPIDHGLCLPECLDDPYFEWLNWPQASVPFTDIELQYISNLDPFKDAELLRTELDSIQESSLRVLIVCTIFLKEAAAAGLSLAEIGEKMTRDICRGEESSSVLEILCNKAKASAVSGSDDDDDYSSEWNEVEAELECGIFQFDDEVECKELPDMLQVPIFTRVPSIAANLSALMRCPPNQWISTYDTNIEEERRDRSIVRSKSHPICVNYDEKEGVYFGDMSGDEWEMFLHSFQMLLPEALEGSTSKGPKPRFGSSCKF.

Residues 101–397 (GAQPLLLPSG…AVSGSDDDDD (297 aa)) enclose the PI3K/PI4K catalytic domain. The G-loop stretch occupies residues 107–113 (LPSGLGG). ATP-binding positions include 108–114 (PSGLGGA), lysine 129, and 210–213 (QRFV). The interval 243–251 (LNLDRHAGN) is catalytic loop. Residues 276–302 (PIDHGLCLPECLDDPYFEWLNWPQASV) are activation loop. Residue aspartate 278 participates in ATP binding.

This sequence belongs to the PI3/PI4-kinase family. Type II PI4K subfamily.

The enzyme catalyses a 1,2-diacyl-sn-glycero-3-phospho-(1D-myo-inositol) + ATP = a 1,2-diacyl-sn-glycero-3-phospho-(1D-myo-inositol 4-phosphate) + ADP + H(+). Functionally, the phosphorylation of phosphatidylinositol (PI) to PI4P is the first committed step in the generation of phosphatidylinositol 4,5-bisphosphate (PIP2), a precursor of the second messenger inositol 1,4,5-trisphosphate (InsP3). In Arabidopsis thaliana (Mouse-ear cress), this protein is Phosphatidylinositol 4-kinase gamma 8 (PI4KG8).